The following is a 131-amino-acid chain: Mediator of RNA polymerase II transcription subunit 31 (131 aa).

A2 bears the N-acetylalanine mark.

It belongs to the Mediator complex subunit 31 family. In terms of assembly, component of the Mediator complex, which is composed of MED1, MED4, MED6, MED7, MED8, MED9, MED10, MED11, MED12, MED13, MED13L, MED14, MED15, MED16, MED17, MED18, MED19, MED20, MED21, MED22, MED23, MED24, MED25, MED26, MED27, MED29, MED30, MED31, CCNC, CDK8 and CDC2L6/CDK11. The MED12, MED13, CCNC and CDK8 subunits form a distinct module termed the CDK8 module. Mediator containing the CDK8 module is less active than Mediator lacking this module in supporting transcriptional activation. Individual preparations of the Mediator complex lacking one or more distinct subunits have been variously termed ARC, CRSP, DRIP, PC2, SMCC and TRAP.

It localises to the nucleus. Component of the Mediator complex, a coactivator involved in the regulated transcription of nearly all RNA polymerase II-dependent genes. Mediator functions as a bridge to convey information from gene-specific regulatory proteins to the basal RNA polymerase II transcription machinery. Mediator is recruited to promoters by direct interactions with regulatory proteins and serves as a scaffold for the assembly of a functional preinitiation complex with RNA polymerase II and the general transcription factors. In Bos taurus (Bovine), this protein is Mediator of RNA polymerase II transcription subunit 31 (MED31).